The following is a 215-amino-acid chain: Pyridoxine/pyridoxamine 5'-phosphate oxidase (215 aa).

Residues 9–12 (RRDY) and Lys69 contribute to the substrate site. Residues 64 to 69 (RVLLLK), 79 to 80 (FT), Lys86, and Gln108 each bind FMN. Positions 126, 130, and 134 each coordinate substrate. FMN contacts are provided by residues 143–144 (QS) and Trp188. 194–196 (RLH) contributes to the substrate binding site. Arg198 is an FMN binding site.

The protein belongs to the pyridoxamine 5'-phosphate oxidase family. As to quaternary structure, homodimer. The cofactor is FMN.

The catalysed reaction is pyridoxamine 5'-phosphate + O2 + H2O = pyridoxal 5'-phosphate + H2O2 + NH4(+). It catalyses the reaction pyridoxine 5'-phosphate + O2 = pyridoxal 5'-phosphate + H2O2. The protein operates within cofactor metabolism; pyridoxal 5'-phosphate salvage; pyridoxal 5'-phosphate from pyridoxamine 5'-phosphate: step 1/1. It functions in the pathway cofactor metabolism; pyridoxal 5'-phosphate salvage; pyridoxal 5'-phosphate from pyridoxine 5'-phosphate: step 1/1. Functionally, catalyzes the oxidation of either pyridoxine 5'-phosphate (PNP) or pyridoxamine 5'-phosphate (PMP) into pyridoxal 5'-phosphate (PLP). The sequence is that of Pyridoxine/pyridoxamine 5'-phosphate oxidase from Pseudomonas putida (strain GB-1).